The following is a 121-amino-acid chain: Small ribosomal subunit protein uS13 (121 aa).

A disordered region spans residues 97–121 (VRGQRTRTNARTRRGARKTVAGKKK). Residues 100 to 121 (QRTRTNARTRRGARKTVAGKKK) show a composition bias toward basic residues.

The protein belongs to the universal ribosomal protein uS13 family. In terms of assembly, part of the 30S ribosomal subunit. Forms a loose heterodimer with protein S19. Forms two bridges to the 50S subunit in the 70S ribosome.

In terms of biological role, located at the top of the head of the 30S subunit, it contacts several helices of the 16S rRNA. In the 70S ribosome it contacts the 23S rRNA (bridge B1a) and protein L5 of the 50S subunit (bridge B1b), connecting the 2 subunits; these bridges are implicated in subunit movement. Contacts the tRNAs in the A and P-sites. This is Small ribosomal subunit protein uS13 from Synechococcus sp. (strain CC9311).